Reading from the N-terminus, the 195-residue chain is Glycerol-3-phosphate acyltransferase (195 aa).

The next 5 helical transmembrane spans lie at 3–23 (FQVV…GFIL), 52–72 (LALL…AIAQ), 80–100 (ILFL…YLFF), 113–133 (LIFI…ICFL), and 147–167 (LIAL…IFAI).

Belongs to the PlsY family. In terms of assembly, probably interacts with PlsX.

Its subcellular location is the cell inner membrane. The enzyme catalyses an acyl phosphate + sn-glycerol 3-phosphate = a 1-acyl-sn-glycero-3-phosphate + phosphate. The protein operates within lipid metabolism; phospholipid metabolism. Catalyzes the transfer of an acyl group from acyl-phosphate (acyl-PO(4)) to glycerol-3-phosphate (G3P) to form lysophosphatidic acid (LPA). This enzyme utilizes acyl-phosphate as fatty acyl donor, but not acyl-CoA or acyl-ACP. The sequence is that of Glycerol-3-phosphate acyltransferase from Ehrlichia ruminantium (strain Gardel).